A 180-amino-acid polypeptide reads, in one-letter code: Large ribosomal subunit protein uL5 (180 aa).

The protein belongs to the universal ribosomal protein uL5 family. As to quaternary structure, part of the 50S ribosomal subunit; part of the 5S rRNA/L5/L18/L25 subcomplex. Contacts the 5S rRNA and the P site tRNA. Forms a bridge to the 30S subunit in the 70S ribosome.

In terms of biological role, this is one of the proteins that bind and probably mediate the attachment of the 5S RNA into the large ribosomal subunit, where it forms part of the central protuberance. In the 70S ribosome it contacts protein S13 of the 30S subunit (bridge B1b), connecting the 2 subunits; this bridge is implicated in subunit movement. Contacts the P site tRNA; the 5S rRNA and some of its associated proteins might help stabilize positioning of ribosome-bound tRNAs. This chain is Large ribosomal subunit protein uL5, found in Streptococcus uberis (strain ATCC BAA-854 / 0140J).